A 129-amino-acid polypeptide reads, in one-letter code: Glycine cleavage system H protein (129 aa).

The Lipoyl-binding domain occupies 24-106 (LLKIGVSEFA…IGEGWLVILK (83 aa)). Residue Lys65 is modified to N6-lipoyllysine.

Belongs to the GcvH family. In terms of assembly, the glycine cleavage system is composed of four proteins: P, T, L and H. It depends on (R)-lipoate as a cofactor.

Its function is as follows. The glycine cleavage system catalyzes the degradation of glycine. The H protein shuttles the methylamine group of glycine from the P protein to the T protein. This Prochlorococcus marinus (strain MIT 9215) protein is Glycine cleavage system H protein.